The primary structure comprises 419 residues: G protein-activated inward rectifier potassium channel 4 (419 aa).

Residues 1–86 (MAGDSRNAMN…LFTTLVDLKW (86 aa)) are Cytoplasmic-facing. The residue at position 5 (S5) is a Phosphoserine. Residues 87–111 (RFNLLVFTMVYTITWLFFGFIWWLI) form a helical membrane-spanning segment. At 112–135 (AYVRGDLDHVGDQEWIPCVENLSG) the chain is on the extracellular side. Positions 136-147 (FVSAFLFSIETE) form an intramembrane region, helical; Pore-forming. Positions 148–154 (TTIGYGF) form an intramembrane region, pore-forming. The Selectivity filter signature appears at 149–154 (TIGYGF). Residues 155-163 (RVITEKCPE) lie on the Extracellular side of the membrane. Residues 164 to 185 (GIILLLVQAILGSIVNAFMVGC) traverse the membrane as a helical segment. The Cytoplasmic portion of the chain corresponds to 186 to 419 (MFVKISQPKK…SVSRATRGSM (234 aa)). A compositionally biased stretch (low complexity) spans 380-390 (LPSPPLLGGCA). Positions 380–419 (LPSPPLLGGCAEAEKEAEAEHDEEEEPNGLSVSRATRGSM) are disordered. Over residues 409–419 (LSVSRATRGSM) the composition is skewed to polar residues.

The protein belongs to the inward rectifier-type potassium channel (TC 1.A.2.1) family. KCNJ5 subfamily. Associates with KCNJ3/GIRK1 or KCNJ6/GRIK2 to form a G-protein-activated heteromultimer pore-forming unit. The resulting inward current is much larger. In terms of tissue distribution, most abundant in heart tissue where it is found predominantly in atria. Also found in brain, kidney, liver, spleen, lung and thymus.

It is found in the membrane. The enzyme catalyses K(+)(in) = K(+)(out). With respect to regulation, heteromultimer composed of KCNJ3/GIRK1 and KCNJ5/GIRK4 is activated by phosphatidylinositol 4,5 biphosphate (PtdIns(4,5)P2). Functionally, inward rectifier potassium channels are characterized by a greater tendency to allow potassium to flow into the cell rather than out of it. Their voltage dependence is regulated by the concentration of extracellular potassium; as external potassium is raised, the voltage range of the channel opening shifts to more positive voltages. The inward rectification is mainly due to the blockage of outward current by internal magnesium. Can be blocked by external barium. This potassium channel is controlled by G proteins. The protein is G protein-activated inward rectifier potassium channel 4 (Kcnj5) of Rattus norvegicus (Rat).